A 490-amino-acid polypeptide reads, in one-letter code: Cardiolipin synthase A (490 aa).

Helical transmembrane passes span 20-40 (LGLL…HAVL) and 49-69 (IAWA…YLVF). PLD phosphodiesterase domains lie at 229 to 256 (VNFR…GVEY) and 403 to 430 (QPGF…DNRS). Residues His234, Lys236, Asp241, His408, Lys410, and Asp415 contribute to the active site.

This sequence belongs to the phospholipase D family. Cardiolipin synthase subfamily. ClsA sub-subfamily.

It is found in the cell inner membrane. The catalysed reaction is 2 a 1,2-diacyl-sn-glycero-3-phospho-(1'-sn-glycerol) = a cardiolipin + glycerol. Its function is as follows. Catalyzes the reversible phosphatidyl group transfer from one phosphatidylglycerol molecule to another to form cardiolipin (CL) (diphosphatidylglycerol) and glycerol. In Pseudomonas aeruginosa (strain LESB58), this protein is Cardiolipin synthase A.